The primary structure comprises 212 residues: Probable GTP-binding protein EngB (212 aa).

Residues 27 to 201 enclose the EngB-type G domain; it reads GGIEIAFAGR…TRILSDWYQP (175 aa). Residues 35–42, 62–66, 80–83, 147–150, and 180–182 each bind GTP; these read GRSNAGKS, GRTQL, DLPG, TKAD, and FSS. Positions 42 and 64 each coordinate Mg(2+).

Belongs to the TRAFAC class TrmE-Era-EngA-EngB-Septin-like GTPase superfamily. EngB GTPase family. Mg(2+) is required as a cofactor.

Functionally, necessary for normal cell division and for the maintenance of normal septation. In Tolumonas auensis (strain DSM 9187 / NBRC 110442 / TA 4), this protein is Probable GTP-binding protein EngB.